The primary structure comprises 456 residues: Kynurenine 3-monooxygenase (456 aa).

It belongs to the aromatic-ring hydroxylase family. KMO subfamily. FAD is required as a cofactor.

It is found in the mitochondrion outer membrane. It catalyses the reaction L-kynurenine + NADPH + O2 + H(+) = 3-hydroxy-L-kynurenine + NADP(+) + H2O. The protein operates within cofactor biosynthesis; NAD(+) biosynthesis; quinolinate from L-kynurenine: step 1/3. Catalyzes the hydroxylation of L-kynurenine (L-Kyn) to form 3-hydroxy-L-kynurenine (L-3OHKyn). Required for synthesis of quinolinic acid. The polypeptide is Kynurenine 3-monooxygenase (Candida albicans (strain SC5314 / ATCC MYA-2876) (Yeast)).